A 233-amino-acid polypeptide reads, in one-letter code: MGQKVHPNGFRLGIIKYWNSTWYANKKEFAQYLNSDFKVRQFLASELTKASISRVVIERPAKSIRITIHTARPGIIIGKKGEDVEKLRKSISLIAGVPSQINIAEVRKPELNAKLVAESIVSQIERRVIFRRAMKRAVQNTIRLGAKGIKVEVSGRLSGVEIARTEWYREGRVPLHTLRADIDYHVSEAHTTYGVIGVKVWIFKGEILDGMMAVEPTIESITPPKTQQRKGRK.

A KH type-2 domain is found at 39–107; it reads VRQFLASELT…PSQINIAEVR (69 aa).

Belongs to the universal ribosomal protein uS3 family. In terms of assembly, part of the 30S ribosomal subunit. Forms a tight complex with proteins S10 and S14.

In terms of biological role, binds the lower part of the 30S subunit head. Binds mRNA in the 70S ribosome, positioning it for translation. This Baumannia cicadellinicola subsp. Homalodisca coagulata protein is Small ribosomal subunit protein uS3.